Reading from the N-terminus, the 431-residue chain is Glutamate-1-semialdehyde 2,1-aminomutase (431 aa).

Lys265 bears the N6-(pyridoxal phosphate)lysine mark.

It belongs to the class-III pyridoxal-phosphate-dependent aminotransferase family. HemL subfamily. As to quaternary structure, homodimer. It depends on pyridoxal 5'-phosphate as a cofactor.

The protein localises to the cytoplasm. The catalysed reaction is (S)-4-amino-5-oxopentanoate = 5-aminolevulinate. Its pathway is porphyrin-containing compound metabolism; protoporphyrin-IX biosynthesis; 5-aminolevulinate from L-glutamyl-tRNA(Glu): step 2/2. The polypeptide is Glutamate-1-semialdehyde 2,1-aminomutase (Aliivibrio fischeri (strain ATCC 700601 / ES114) (Vibrio fischeri)).